A 165-amino-acid chain; its full sequence is Small ribosomal subunit protein uS5 (165 aa).

One can recognise an S5 DRBM domain in the interval 10 to 73 (QIEKLISLNR…TSARKNLRFV (64 aa)).

The protein belongs to the universal ribosomal protein uS5 family. In terms of assembly, part of the 30S ribosomal subunit. Contacts proteins S4 and S8.

In terms of biological role, with S4 and S12 plays an important role in translational accuracy. Located at the back of the 30S subunit body where it stabilizes the conformation of the head with respect to the body. The sequence is that of Small ribosomal subunit protein uS5 from Borreliella burgdorferi (strain ATCC 35210 / DSM 4680 / CIP 102532 / B31) (Borrelia burgdorferi).